Reading from the N-terminus, the 566-residue chain is DDB1- and CUL4-associated factor 10 (566 aa).

2 disordered regions span residues 1 to 72 (MFPF…AERA) and 87 to 123 (TASA…GAGL). S50, S57, S67, S96, S99, and S100 each carry phosphoserine. Low complexity predominate over residues 87–100 (TASASQAKLSPSSS). The residue at position 141 (R141) is an Omega-N-methylarginine. 4 WD repeats span residues 173–212 (RTHG…HIKT), 216–254 (AHED…TKVC), 258–297 (GHTS…EDGC), and 303–342 (FHTR…KSLE). The span at 354–374 (TTSSSDLTTTSSSSGSRVSGS) shows a compositional bias: low complexity. Residues 354 to 413 (TTSSSDLTTTSSSSGSRVSGSPCHHNDSNSTEKHMSRASQREGVSPRNSLEVLTPEVPGE) form a disordered region. S356 is modified (phosphoserine). The span at 377–388 (HHNDSNSTEKHM) shows a compositional bias: basic and acidic residues. WD repeat units follow at residues 415 to 455 (DRGN…QEGA), 477 to 515 (VGRG…SELV), and 533 to 566 (SHND…QPKF).

The protein belongs to the WD repeat DCAF10 family. Interacts with DDB1.

The protein operates within protein modification; protein ubiquitination. Functionally, may function as a substrate receptor for CUL4-DDB1 E3 ubiquitin-protein ligase complex. This chain is DDB1- and CUL4-associated factor 10 (Dcaf10), found in Mus musculus (Mouse).